Consider the following 189-residue polypeptide: dCTP deaminase (189 aa).

DCTP is bound by residues 112–117 (KSTYAR), 136–138 (TLE), Gln-157, Tyr-171, and Gln-181. The Proton donor/acceptor role is filled by Glu-138.

This sequence belongs to the dCTP deaminase family. In terms of assembly, homotrimer.

The enzyme catalyses dCTP + H2O + H(+) = dUTP + NH4(+). It participates in pyrimidine metabolism; dUMP biosynthesis; dUMP from dCTP (dUTP route): step 1/2. Its function is as follows. Catalyzes the deamination of dCTP to dUTP. This is dCTP deaminase from Burkholderia mallei (strain NCTC 10247).